The following is a 303-amino-acid chain: E3 ubiquitin-protein ligase SINA-like 3 (303 aa).

Positions 1–30 are disordered; that stretch reads MENITNNSERSLDRPKRQRPVSMENVGGTA. The RING-type zinc finger occupies 49 to 85; it reads CPICYHKLGAPIYQCDNGHIACSSCCKKVKYKCPYCS. The tract at residues 99–286 is SBD; it reads IVEAVVVSCP…MSIPYYLLDE (188 aa). An SIAH-type zinc finger spans residues 102–162; the sequence is AVVVSCPNAK…LYRHYHAEHK (61 aa). Residues Cys107, Cys114, His128, Cys132, Cys139, Cys144, His156, and His161 each contribute to the Zn(2+) site.

It belongs to the SINA (Seven in absentia) family.

The catalysed reaction is S-ubiquitinyl-[E2 ubiquitin-conjugating enzyme]-L-cysteine + [acceptor protein]-L-lysine = [E2 ubiquitin-conjugating enzyme]-L-cysteine + N(6)-ubiquitinyl-[acceptor protein]-L-lysine.. It functions in the pathway protein modification; protein ubiquitination. E3 ubiquitin-protein ligase that mediates ubiquitination and subsequent proteasomal degradation of target proteins. E3 ubiquitin ligases accept ubiquitin from an E2 ubiquitin-conjugating enzyme in the form of a thioester and then directly transfers the ubiquitin to targeted substrates. It probably triggers the ubiquitin-mediated degradation of different substrates. This Arabidopsis thaliana (Mouse-ear cress) protein is E3 ubiquitin-protein ligase SINA-like 3.